The chain runs to 132 residues: Agouti-signaling protein (132 aa).

A signal peptide spans 1–22 (MDVTRLLLATLLVFLCFFTADS). N-linked (GlcNAc...) asparagine glycosylation occurs at Asn39. The interval 62–85 (ISRKEAEKKRSSKKEASMKTVARP) is disordered. Residues 63-78 (SRKEAEKKRSSKKEAS) show a composition bias toward basic and acidic residues. 5 disulfide bridges follow: Cys93/Cys108, Cys100/Cys114, Cys107/Cys125, Cys111/Cys132, and Cys116/Cys123. An Agouti domain is found at 93–132 (CVATRNSCKPPAPACCDPCASCQCRFFRSACSCRVLSLNC).

It localises to the secreted. Its function is as follows. Involved in the regulation of melanogenesis. The binding of ASP to MC1R precludes alpha-MSH initiated signaling and thus blocks production of cAMP, leading to a down-regulation of eumelanogenesis (brown/black pigment) and thus increasing synthesis of pheomelanin (yellow/red pigment). In Pongo pygmaeus (Bornean orangutan), this protein is Agouti-signaling protein (ASIP).